A 747-amino-acid chain; its full sequence is Pseudouridine-metabolizing bifunctional protein C1861.05 (747 aa).

The interval 1–379 (MLIVMNRGCR…KVSDKGVSSS (379 aa)) is pseudouridine-5'-phosphate glycosidase. The active-site Proton donor; for PsiMP glycosidase activity is Glu61. Substrate is bound by residues Lys123 and Val143. A Mn(2+)-binding site is contributed by Asp175. 177–179 (SAD) provides a ligand contact to substrate. The active-site Nucleophile; for PsiMP glycosidase activity is Lys196. The pseudouridine kinase stretch occupies residues 380-747 (KKKITETTSK…VNPEIKTLLK (368 aa)).

It in the N-terminal section; belongs to the pseudouridine-5'-phosphate glycosidase family. The protein in the C-terminal section; belongs to the carbohydrate kinase PfkB family. It depends on Mn(2+) as a cofactor.

It is found in the cytoplasm. The enzyme catalyses D-ribose 5-phosphate + uracil = psi-UMP + H2O. It carries out the reaction pseudouridine + ATP = psi-UMP + ADP + H(+). In terms of biological role, bifunctional enzyme that catalyzes the phosphorylation of pseudouridine to pseudouridine 5'-phosphate (PsiMP), and the reversible cleavage of pseudouridine 5'-phosphate to ribose 5-phosphate and uracil. Is involved in a pseudouridine degradation pathway. The protein is Pseudouridine-metabolizing bifunctional protein C1861.05 of Schizosaccharomyces pombe (strain 972 / ATCC 24843) (Fission yeast).